Consider the following 173-residue polypeptide: Photosystem I assembly protein Ycf3 (173 aa).

3 TPR repeats span residues 35-68 (AYLYYRKGLAAQNDGDYSEALEYYEESLKLEDNQ), 72-105 (GETLKNMAIIYMSNGDEERAINTYKKALGQNPKQ), and 120-153 (GRMAQRNGNQDECDIWFDQAAEVWSKAVRLYPGG).

Belongs to the Ycf3 family.

It localises to the cellular thylakoid membrane. Functionally, essential for the assembly of the photosystem I (PSI) complex. May act as a chaperone-like factor to guide the assembly of the PSI subunits. This Prochlorococcus marinus (strain NATL2A) protein is Photosystem I assembly protein Ycf3.